We begin with the raw amino-acid sequence, 137 residues long: Peptide methionine sulfoxide reductase MsrB (137 aa).

The region spanning 7–129 (AEELKKNLSD…NSASLRFTDG (123 aa)) is the MsrB domain. Zn(2+)-binding residues include Cys46, Cys49, Cys95, and Cys98. Cys118 serves as the catalytic Nucleophile.

This sequence belongs to the MsrB Met sulfoxide reductase family. Zn(2+) serves as cofactor.

It catalyses the reaction L-methionyl-[protein] + [thioredoxin]-disulfide + H2O = L-methionyl-(R)-S-oxide-[protein] + [thioredoxin]-dithiol. The polypeptide is Peptide methionine sulfoxide reductase MsrB (Shigella dysenteriae serotype 1 (strain Sd197)).